Consider the following 133-residue polypeptide: Small ribosomal subunit protein uS8 (133 aa).

This sequence belongs to the universal ribosomal protein uS8 family. In terms of assembly, part of the 30S ribosomal subunit. Contacts proteins S5 and S12.

Functionally, one of the primary rRNA binding proteins, it binds directly to 16S rRNA central domain where it helps coordinate assembly of the platform of the 30S subunit. This is Small ribosomal subunit protein uS8 from Prochlorococcus marinus (strain MIT 9313).